We begin with the raw amino-acid sequence, 338 residues long: Ferredoxin--NADP reductase (338 aa).

The FAD site is built by Asp-32, Gln-40, Tyr-45, Val-85, Phe-120, Asp-287, and Thr-327.

It belongs to the ferredoxin--NADP reductase type 2 family. As to quaternary structure, homodimer. Requires FAD as cofactor.

The enzyme catalyses 2 reduced [2Fe-2S]-[ferredoxin] + NADP(+) + H(+) = 2 oxidized [2Fe-2S]-[ferredoxin] + NADPH. This Wolbachia pipientis wMel protein is Ferredoxin--NADP reductase.